The sequence spans 264 residues: NFAT activation molecule 1 (264 aa).

The first 37 residues, 1-37 (MESWLLRRGARVRCLHPPSWLPAWCFLCLLPVPQTLQ), serve as a signal peptide directing secretion. Topologically, residues 38 to 159 (LTGLVSLTHT…QPPAFKVQEA (122 aa)) are extracellular. The 97-residue stretch at 49–145 (LPIMVSLANT…QSDGVVILVR (97 aa)) folds into the Ig-like V-type domain. Cys64 and Cys110 form a disulfide bridge. Residues Asn105 and Asn118 are each glycosylated (N-linked (GlcNAc...) asparagine). A helical transmembrane segment spans residues 160 to 180 (LMLGFTSLMSVLGVLGTALLL). The Cytoplasmic segment spans residues 181-264 (WKKKQISVLG…NEFNLVYENL (84 aa)). The ITAM domain maps to 212–232 (ESVYTSLQRRETEVYACMKEE). Phosphotyrosine occurs at positions 215 and 226.

As to quaternary structure, no direct interaction with the B-cell antigen receptor (BCR). Interacts with SYK; probably involved in BCR signaling. Interacts with ZAP70. In terms of processing, N-glycosylated. Highly expressed in the spleen, expressed by both B- and CD4+ and CD8+ T-cells, as well as non-T- and non-B-cells, including macrophages and neutrophils. Expressed at low levels, if any, in non-immune tissue.

The protein resides in the cell membrane. In terms of biological role, may function in immune system as a receptor which activates via the calcineurin/NFAT-signaling pathway the downstream cytokine gene promoters. Activates the transcription of IL-13 and TNF-alpha promoters. May be involved in the regulation of B-cell, but not T-cell, development. This chain is NFAT activation molecule 1 (Nfam1), found in Mus musculus (Mouse).